The sequence spans 206 residues: Large ribosomal subunit protein uL22m (206 aa).

Residues 1–40 constitute a mitochondrion transit peptide; that stretch reads MAAAVLGQLGALWIHNLRSRGKLALGVLPQSYIHTSASLD.

This sequence belongs to the universal ribosomal protein uL22 family. Component of the mitochondrial large ribosomal subunit (mt-LSU). Mature mammalian 55S mitochondrial ribosomes consist of a small (28S) and a large (39S) subunit. The 28S small subunit contains a 12S ribosomal RNA (12S mt-rRNA) and 30 different proteins. The 39S large subunit contains a 16S rRNA (16S mt-rRNA), a copy of mitochondrial valine transfer RNA (mt-tRNA(Val)), which plays an integral structural role, and 52 different proteins.

Its subcellular location is the mitochondrion. In Homo sapiens (Human), this protein is Large ribosomal subunit protein uL22m (MRPL22).